The following is a 275-amino-acid chain: Large ribosomal subunit protein uL2 (275 aa).

The segment at 225–275 is disordered; it reads MNPVDHPHGGGEGRSPIGRPPVTPWGKPALGTRTRNKKKASSKLIVKRRTK. The segment covering 258–275 has biased composition (basic residues); sequence TRNKKKASSKLIVKRRTK.

It belongs to the universal ribosomal protein uL2 family. In terms of assembly, part of the 50S ribosomal subunit. Forms a bridge to the 30S subunit in the 70S ribosome.

In terms of biological role, one of the primary rRNA binding proteins. Required for association of the 30S and 50S subunits to form the 70S ribosome, for tRNA binding and peptide bond formation. It has been suggested to have peptidyltransferase activity; this is somewhat controversial. Makes several contacts with the 16S rRNA in the 70S ribosome. This Desulforudis audaxviator (strain MP104C) protein is Large ribosomal subunit protein uL2.